The following is a 554-amino-acid chain: 2-succinyl-5-enolpyruvyl-6-hydroxy-3-cyclohexene-1-carboxylate synthase (554 aa).

The protein belongs to the TPP enzyme family. MenD subfamily. Homodimer. The cofactor is Mg(2+). Mn(2+) is required as a cofactor. Requires thiamine diphosphate as cofactor.

It carries out the reaction isochorismate + 2-oxoglutarate + H(+) = 5-enolpyruvoyl-6-hydroxy-2-succinyl-cyclohex-3-ene-1-carboxylate + CO2. It functions in the pathway quinol/quinone metabolism; 1,4-dihydroxy-2-naphthoate biosynthesis; 1,4-dihydroxy-2-naphthoate from chorismate: step 2/7. It participates in quinol/quinone metabolism; menaquinone biosynthesis. Catalyzes the thiamine diphosphate-dependent decarboxylation of 2-oxoglutarate and the subsequent addition of the resulting succinic semialdehyde-thiamine pyrophosphate anion to isochorismate to yield 2-succinyl-5-enolpyruvyl-6-hydroxy-3-cyclohexene-1-carboxylate (SEPHCHC). This is 2-succinyl-5-enolpyruvyl-6-hydroxy-3-cyclohexene-1-carboxylate synthase from Mycobacterium tuberculosis (strain ATCC 25177 / H37Ra).